Reading from the N-terminus, the 398-residue chain is Ureide permease 2 (398 aa).

The Extracellular segment spans residues 1-10; the sequence is MYLVESKGGA. The chain crosses the membrane as a helical span at residues 11 to 31; sequence IACMLLALLSLGTWPAVLTLL. Topologically, residues 32–44 are cytoplasmic; that stretch reads ERRGRLPQHTYLD. The helical transmembrane segment at 45–65 threads the bilayer; the sequence is YSITNLLAAIIIAFTFGQIGS. Residues 66–81 are Extracellular-facing; that stretch reads TKPDSPNFITQLAQDN. Residues 82–102 traverse the membrane as a helical segment; that stretch reads WPSVMFAMAGGIVLSLGNLST. At 103–104 the chain is on the cytoplasmic side; it reads QY. The chain crosses the membrane as a helical span at residues 105-125; that stretch reads AWALVGLSVTEVITSSITVVI. At 126 to 139 the chain is on the extracellular side; the sequence is GSTLNYFLDDKINK. A helical transmembrane segment spans residues 140–160; the sequence is AEILFPGVACFLIAVCLGSAV. Residues 161-229 are Cytoplasmic-facing; that stretch reads HRSNADDNKA…RAIKVFGKRK (69 aa). Positions 176-200 are disordered; the sequence is ETAKQEASGPSTEIGTNSSKDLETN. Positions 183–200 are enriched in polar residues; the sequence is SGPSTEIGTNSSKDLETN. An ATP-binding site is contributed by 221-228; it reads AIKVFGKR. The helical transmembrane segment at 230–250 threads the bilayer; sequence IIGLAITFFAGLCFSLFSPAF. The Extracellular portion of the chain corresponds to 251-272; sequence NLATNDQWNRLKQGVPKLVVYT. The chain crosses the membrane as a helical span at residues 273–293; it reads AFFYFSVSCFIIALILNVVFL. Residues 294-315 lie on the Cytoplasmic side of the membrane; the sequence is YYPVLGLPKSSFKAYLNDWNGR. The chain crosses the membrane as a helical span at residues 316–336; the sequence is YWAFLAGFLCGFGNGLQFMGG. At 337-341 the chain is on the extracellular side; that stretch reads QAAGY. The helical transmembrane segment at 342-362 threads the bilayer; the sequence is AAADSVQALPLVSTFWGVVLF. At 363–371 the chain is on the cytoplasmic side; the sequence is GEYRRSSRK. The chain crosses the membrane as a helical span at residues 372 to 392; the sequence is TYLLLFCMLFMFISAVAVLMA. Residues 393–398 lie on the Extracellular side of the membrane; the sequence is SSGHRK.

Belongs to the plant ureide permease (TC 2.A.7.19) family. Expressed in root xylem, cotyledons and leaves. Expressed in leaf blades, petioles, trichomes, stems, flower stigma, the upper part of pedicels, sepals, and the top and bottom parts of carpels in siliques.

Its subcellular location is the membrane. Functionally, proton-coupled transporter that transports a wide spectrum of oxo derivatives of heterocyclic nitrogen compounds, including allantoin, uric acid and xanthine, but not adenine. Mediates high affinity transport of uracil and 5-fluorouracil (a toxic uracil analog). Mediates transport of free pyrimidines and may function during early seedling development in salvage pathways, by the utilization of pyrimidines from seed storage tissue. This is Ureide permease 2 from Arabidopsis thaliana (Mouse-ear cress).